A 463-amino-acid chain; its full sequence is Chromosomal replication initiator protein DnaA (463 aa).

The interval 1-83 (MSTNQIILTD…LQLFQHYNNT (83 aa)) is domain I, interacts with DnaA modulators. The tract at residues 83-124 (TIKSIEIITKELPGTTQTVTELPTKTFADIGSSELNSENIFS) is domain II. Positions 125 to 343 (TLDVRFTFDN…GALNKVIAHS (219 aa)) are domain III, AAA+ region. Residues glycine 171, glycine 173, lysine 174, and threonine 175 each coordinate ATP. The tract at residues 344 to 463 (NFTLKEITLE…INLLMKILQN (120 aa)) is domain IV, binds dsDNA.

Belongs to the DnaA family. In terms of assembly, oligomerizes as a right-handed, spiral filament on DNA at oriC.

The protein resides in the cytoplasm. In terms of biological role, plays an essential role in the initiation and regulation of chromosomal replication. ATP-DnaA binds to the origin of replication (oriC) to initiate formation of the DNA replication initiation complex once per cell cycle. Binds the DnaA box (a 9 base pair repeat at the origin) and separates the double-stranded (ds)DNA. Forms a right-handed helical filament on oriC DNA; dsDNA binds to the exterior of the filament while single-stranded (ss)DNA is stabiized in the filament's interior. The ATP-DnaA-oriC complex binds and stabilizes one strand of the AT-rich DNA unwinding element (DUE), permitting loading of DNA polymerase. After initiation quickly degrades to an ADP-DnaA complex that is not apt for DNA replication. Binds acidic phospholipids. This is Chromosomal replication initiator protein DnaA from Rickettsia conorii (strain ATCC VR-613 / Malish 7).